Consider the following 127-residue polypeptide: Large ribosomal subunit protein bL17 (127 aa).

Belongs to the bacterial ribosomal protein bL17 family. Part of the 50S ribosomal subunit. Contacts protein L32.

In Stenotrophomonas maltophilia (strain R551-3), this protein is Large ribosomal subunit protein bL17.